Reading from the N-terminus, the 836-residue chain is Subtilisin-like protease PIMMS2 (836 aa).

Catalysis depends on charge relay system residues aspartate 155, histidine 222, and serine 414. Positions 802-836 are disordered; that stretch reads EKKNKYNNSVLKRNEMKSHNNSQKTPKIIPRKYSR.

This sequence belongs to the peptidase S8 family.

The protein localises to the cell membrane. The enzyme catalyses Hydrolysis of proteins with broad specificity for peptide bonds, and a preference for a large uncharged residue in P1. Hydrolyzes peptide amides.. Probable serine protease which plays a role in ookinete traversal of the mosquito host midgut epithelium. This is Subtilisin-like protease PIMMS2 from Plasmodium berghei (strain Anka).